The primary structure comprises 164 residues: Hoefavidin (164 aa).

Residues 1–22 (MNKVLAIVLTITVAGFAQTAFA) form the signal peptide. One can recognise an Avidin-like domain in the interval 32–155 (KLLAGASNWV…GQDDFMQSVA (124 aa)). The biotin site is built by N42, S46, Y68, N70, and G76. Cysteines 77 and 108 form a disulfide. Positions 110, 112, and 148 each coordinate biotin.

The protein belongs to the avidin/streptavidin family. As to quaternary structure, exhibits a dynamic oligomeric assembly: the apo form exits as homooctamers, which dissociate into homodimers upon biotin binding. The X-ray structure of the intact hoefavidin reveals unique crystal packing generated by an octameric cylindrical structure wherein the C-terminal segments of each monomer are introduced into the entrance of the biotin-binding site of an adjacent non-canonical monomer.

It is found in the secreted. The exact role played by hoefavidin in the host organism is still obscure. Forms a strong non-covalent complex with biotin and 2-iminobiotin. This Hoeflea phototrophica (strain DSM 17068 / NCIMB 14078 / DFL-43) protein is Hoefavidin.